The following is a 151-amino-acid chain: HTH-type transcriptional regulator FL11 (151 aa).

Residues 5–66 (LDEIDKKIIK…IIDPEALGYS (62 aa)) enclose the HTH asnC-type domain. The segment at residues 24 to 43 (LREISKITGLAESTIHERIR) is a DNA-binding region (H-T-H motif). 98 to 104 (ETTGDYD) is a binding site for L-arginine. L-lysine contacts are provided by residues N118, D122, and 133-135 (THT). L-arginine contacts are provided by residues D122 and 133–135 (THT).

As to quaternary structure, homodimer. Binds DNA as a dimer and an octamer. The octamer formed with lysine is stable in solution, but the octamer formed with arginine is unstable without DNA. When crystallized in the absence of DNA, dimers are assembled into helical cylinders with six dimers per turn. In solution, predominantly behaves as a dimer.

Its activity is regulated as follows. In the famine mode, FL11 forms dimers and acts as a repressor, leading to growth arrest. In the feast mode, in the presence of high concentrations of lysine or arginine, four dimers assemble into an octamer and cover the fl11 and lysine biosynthesis promoters. This leads to the inhibition of fl11 expression and lysine biosynthesis, decrease of the FL11 concentration in the cell, derepression of the target genes and activation of the metabolism. Its function is as follows. DNA-binding protein involved in the repression of transcription of a large number of genes, thereby arresting growth, in response to environmental changes. Binding sites are identified in promoters of approximately 200 transcription units, including genes involved in ATP synthesis, transmembrane transport, translation and DNA synthesis. The sequence is that of HTH-type transcriptional regulator FL11 from Pyrococcus horikoshii (strain ATCC 700860 / DSM 12428 / JCM 9974 / NBRC 100139 / OT-3).